Reading from the N-terminus, the 231-residue chain is Large ribosomal subunit protein uL1 (231 aa).

It belongs to the universal ribosomal protein uL1 family. Part of the 50S ribosomal subunit.

Functionally, binds directly to 23S rRNA. The L1 stalk is quite mobile in the ribosome, and is involved in E site tRNA release. In terms of biological role, protein L1 is also a translational repressor protein, it controls the translation of the L11 operon by binding to its mRNA. The sequence is that of Large ribosomal subunit protein uL1 from Janthinobacterium sp. (strain Marseille) (Minibacterium massiliensis).